The sequence spans 617 residues: Sodium-coupled monocarboxylate transporter 2 (617 aa).

At 1-5 (MEVKN) the chain is on the extracellular side. A helical membrane pass occupies residues 6 to 26 (FAVWDYVVFAALFIISSGIGV). Residues 27-47 (FYAIKERKKATSREFLVGGRQ) are Cytoplasmic-facing. The chain crosses the membrane as a helical span at residues 48 to 68 (MSFGPVALSLTASFMSAVTVL). Over 69–80 (GTPADVYRFGAS) the chain is Extracellular. A helical membrane pass occupies residues 81-101 (FVLFFITYGLVIILTSELFLP). Topologically, residues 102-128 (VFYRSGITSTYEYLQLRFNKPVRYAAT) are cytoplasmic. The helical transmembrane segment at 129-149 (VIYIVQTILYTGVVVYAPALA) threads the bilayer. The Extracellular segment spans residues 150 to 157 (LNQVTGFD). Residues 158 to 178 (LWGSVFATGIVCTFYCTLGGL) traverse the membrane as a helical segment. Residues 179–180 (KA) are Cytoplasmic-facing. Residues 181-201 (VVWTDAFQMVVMIVGFLTVLI) traverse the membrane as a helical segment. At 202–235 (QGSTYAGGLHNVLEQAENGSRLNIFDFDIDPLRR) the chain is on the extracellular side. Residue Asn219 is glycosylated (N-linked (GlcNAc...) asparagine). Residues 236-256 (HTFWTISVGGTFTWLGIYGVN) traverse the membrane as a helical segment. The Cytoplasmic segment spans residues 257–273 (QSTIQRCISCKTEKHAK). A helical membrane pass occupies residues 274 to 294 (LALYFNLLGLWIILLCAVFSG). Residues 295–334 (LTMYAHFKDCDPWTSGIISAPDQLMPYFVMELFSTMPGLP) lie on the Extracellular side of the membrane. The helical transmembrane segment at 335–357 (GLFVACAFSGTLSTVAASINALA) threads the bilayer. The Cytoplasmic portion of the chain corresponds to 358–385 (TVTFEDFVKSCFPRLSDKLSTWISKGLC). The chain crosses the membrane as a helical span at residues 386 to 406 (LLFGVICTSTAVAASLMGGVI). Residues 407–411 (QAALS) lie on the Extracellular side of the membrane. The helical transmembrane segment at 412–432 (IHGMCGGPMLGLFSLGILFPF) threads the bilayer. The Cytoplasmic segment spans residues 433 to 437 (VNWKG). The helical transmembrane segment at 438–458 (ALAGLLTGILLSFWVAIGAFI) threads the bilayer. The Extracellular segment spans residues 459–507 (YPAPASKTWPLPLSTDQCGLSNVTESVPPVLSSRPAIAETWYALSYLHY). An N-linked (GlcNAc...) asparagine glycan is attached at Asn480. The chain crosses the membrane as a helical span at residues 508–528 (STVGCLGCIAAGVIISFLTGL). At 529-617 (QKGKDIPPLL…NMALEKITHF (89 aa)) the chain is on the cytoplasmic side.

The protein belongs to the sodium:solute symporter (SSF) (TC 2.A.21) family.

The protein resides in the apical cell membrane. It carries out the reaction (S)-lactate(out) + Na(+)(out) = (S)-lactate(in) + Na(+)(in). It catalyses the reaction nicotinate(out) + Na(+)(out) = nicotinate(in) + Na(+)(in). The catalysed reaction is pyruvate(out) + Na(+)(out) = pyruvate(in) + Na(+)(in). The enzyme catalyses propanoate(out) + Na(+)(out) = propanoate(in) + Na(+)(in). It carries out the reaction butanoate(out) + Na(+)(out) = butanoate(in) + Na(+)(in). It catalyses the reaction acetoacetate(out) + Na(+)(out) = acetoacetate(in) + Na(+)(in). In terms of biological role, acts as an electroneutral and low-affinity sodium (Na(+))-dependent sodium-coupled solute transporter. Catalyzes the transport across the plasma membrane of many monocarboxylates such as lactate, pyruvate, nicotinate, propionate, butyrate and beta-D-hydroxybutyrate. May be responsible for the first step of reabsorption of monocarboxylates from the lumen of the proximal tubule of the kidney and the small intestine. May play also a role in monocarboxylates transport in the retina. Mediates electroneutral uptake of lactate, with a stoichiometry of 2 Na(+) for each lactate. The protein is Sodium-coupled monocarboxylate transporter 2 (SLC5A12) of Bos taurus (Bovine).